A 361-amino-acid polypeptide reads, in one-letter code: DNA replication and repair protein RecF (361 aa).

30–37 contributes to the ATP binding site; sequence GPNGSGKT.

Belongs to the RecF family.

Its subcellular location is the cytoplasm. Its function is as follows. The RecF protein is involved in DNA metabolism; it is required for DNA replication and normal SOS inducibility. RecF binds preferentially to single-stranded, linear DNA. It also seems to bind ATP. The sequence is that of DNA replication and repair protein RecF from Yersinia enterocolitica serotype O:8 / biotype 1B (strain NCTC 13174 / 8081).